Reading from the N-terminus, the 188-residue chain is Elongation factor P (188 aa).

This sequence belongs to the elongation factor P family.

The protein localises to the cytoplasm. Its pathway is protein biosynthesis; polypeptide chain elongation. In terms of biological role, involved in peptide bond synthesis. Stimulates efficient translation and peptide-bond synthesis on native or reconstituted 70S ribosomes in vitro. Probably functions indirectly by altering the affinity of the ribosome for aminoacyl-tRNA, thus increasing their reactivity as acceptors for peptidyl transferase. This Rickettsia rickettsii (strain Iowa) protein is Elongation factor P.